Consider the following 860-residue polypeptide: DNA mismatch repair protein MutS (860 aa).

Position 620-627 (620-627) interacts with ATP; the sequence is GPNMGGKS.

Belongs to the DNA mismatch repair MutS family.

Its function is as follows. This protein is involved in the repair of mismatches in DNA. It is possible that it carries out the mismatch recognition step. This protein has a weak ATPase activity. The protein is DNA mismatch repair protein MutS of Dechloromonas aromatica (strain RCB).